We begin with the raw amino-acid sequence, 192 residues long: Imidazoleglycerol-phosphate dehydratase (192 aa).

It belongs to the imidazoleglycerol-phosphate dehydratase family.

The protein localises to the cytoplasm. It carries out the reaction D-erythro-1-(imidazol-4-yl)glycerol 3-phosphate = 3-(imidazol-4-yl)-2-oxopropyl phosphate + H2O. The protein operates within amino-acid biosynthesis; L-histidine biosynthesis; L-histidine from 5-phospho-alpha-D-ribose 1-diphosphate: step 6/9. The polypeptide is Imidazoleglycerol-phosphate dehydratase (Staphylococcus aureus (strain bovine RF122 / ET3-1)).